The chain runs to 236 residues: L-aspartate dehydrogenase (236 aa).

NAD(+)-binding positions include 10 to 11, Asp31, 58 to 59, Tyr66, 80 to 81, Ala111, and Asn162; these read AI, AS, and LS. His189 is an active-site residue. 212-215 provides a ligand contact to NAD(+); it reads NPKT.

Belongs to the L-aspartate dehydrogenase family. In terms of assembly, homodimer.

It carries out the reaction L-aspartate + NADP(+) + H2O = oxaloacetate + NH4(+) + NADPH + H(+). The enzyme catalyses L-aspartate + NAD(+) + H2O = oxaloacetate + NH4(+) + NADH + H(+). It functions in the pathway cofactor biosynthesis; NAD(+) biosynthesis; iminoaspartate from L-aspartate (dehydrogenase route): step 1/1. In terms of biological role, specifically catalyzes the NAD or NADP-dependent dehydrogenation of L-aspartate to iminoaspartate. This chain is L-aspartate dehydrogenase, found in Archaeoglobus fulgidus (strain ATCC 49558 / DSM 4304 / JCM 9628 / NBRC 100126 / VC-16).